The following is a 277-amino-acid chain: MENNKTSVDSKSINNFEVKTIHGSKSVDSGIYLDSSYKMDYPEMGICIIINNKNFHKSTGMSSRSGTDVDAANLRETFMGLKYQVRNKNDLTREDILELMDSVSKEDHSKRSSFVCVILSHGDEGVIYGTNGPVELKKLTSFFRGDYCRSLTGKPKLFIIQACRGTELDCGIETDSGTDEEMACQKIPVEADFLYAYSTAPGYYSWRNSKDGSWFIQSLCSMLKLYAHKLEFMHILTRVNRKVATEFESFSLDSTFHAKKQIPCIVSMLTKELYFYH.

An N-acetylmethionine modification is found at Met1. Propeptides lie at residues 1 to 9 and 10 to 28; these read MENNKTSVD and SKSI…KSVD. Lys11 carries the post-translational modification N6-acetyllysine. Ser26 is modified (phosphoserine). Active-site residues include His121 and Cys163. Cys163 bears the S-nitrosocysteine; in inhibited form mark.

It belongs to the peptidase C14A family. Heterotetramer that consists of two anti-parallel arranged heterodimers, each one formed by a 17 kDa (p17) and a 12 kDa (p12) subunit. Interacts with BIRC6/bruce. Post-translationally, cleavage by granzyme B, caspase-6, caspase-8 and caspase-10 generates the two active subunits. Additional processing of the propeptides is likely due to the autocatalytic activity of the activated protease. Active heterodimers between the small subunit of caspase-7 protease and the large subunit of caspase-3 also occur and vice versa. In terms of processing, S-nitrosylated on its catalytic site cysteine in unstimulated cell lines and denitrosylated upon activation of the Fas apoptotic pathway, associated with an increase in intracellular caspase activity. Fas therefore activates caspase-3 not only by inducing the cleavage of the caspase zymogen to its active subunits, but also by stimulating the denitrosylation of its active site thiol. Ubiquitinated by BIRC6; this activity is inhibited by DIABLO/SMAC. In terms of tissue distribution, highest expression in spleen, lung, liver, kidney and heart. Lower expression in brain, skeletal muscle and testis.

It is found in the cytoplasm. The catalysed reaction is Strict requirement for an Asp residue at positions P1 and P4. It has a preferred cleavage sequence of Asp-Xaa-Xaa-Asp-|- with a hydrophobic amino-acid residue at P2 and a hydrophilic amino-acid residue at P3, although Val or Ala are also accepted at this position.. Inhibited by BIRC6; following inhibition of BIRC6-caspase binding by DIABLO/SMAC, BIRC6 is subjected to caspase cleavage, leading to an increase in active caspases. Its function is as follows. Thiol protease that acts as a major effector caspase involved in the execution phase of apoptosis. Following cleavage and activation by initiator caspases (CASP8, CASP9 and/or CASP10), mediates execution of apoptosis by catalyzing cleavage of many proteins. At the onset of apoptosis, it proteolytically cleaves poly(ADP-ribose) polymerase PARP1 at a '216-Asp-|-Gly-217' bond. Cleaves and activates sterol regulatory element binding proteins (SREBPs) between the basic helix-loop-helix leucine zipper domain and the membrane attachment domain. Cleaves and activates caspase-6, -7 and -9 (CASP6, CASP7 and CASP9, respectively). Cleaves and inactivates interleukin-18 (IL18). Triggers cell adhesion in sympathetic neurons through RET cleavage. Cleaves IL-1 beta between an Asp and an Ala, releasing the mature cytokine which is involved in a variety of inflammatory processes. Cleaves and inhibits serine/threonine-protein kinase AKT1 in response to oxidative stress. Acts as an inhibitor of type I interferon production during virus-induced apoptosis by mediating cleavage of antiviral proteins CGAS, IRF3 and MAVS, thereby preventing cytokine overproduction. Also involved in pyroptosis by mediating cleavage and activation of gasdermin-E (GSDME). Cleaves XRCC4 and phospholipid scramblase proteins XKR4, XKR8 and XKR9, leading to promote phosphatidylserine exposure on apoptotic cell surface. Cleaves BIRC6 following inhibition of BIRC6-caspase binding by DIABLO/SMAC. The protein is Caspase-3 (Casp3) of Mus musculus (Mouse).